The chain runs to 479 residues: Glutamyl-tRNA(Gln) amidotransferase subunit A (479 aa).

Active-site charge relay system residues include Lys-75 and Ser-150. Catalysis depends on Ser-174, which acts as the Acyl-ester intermediate.

The protein belongs to the amidase family. GatA subfamily. In terms of assembly, heterotrimer of A, B and C subunits.

It carries out the reaction L-glutamyl-tRNA(Gln) + L-glutamine + ATP + H2O = L-glutaminyl-tRNA(Gln) + L-glutamate + ADP + phosphate + H(+). Its function is as follows. Allows the formation of correctly charged Gln-tRNA(Gln) through the transamidation of misacylated Glu-tRNA(Gln) in organisms which lack glutaminyl-tRNA synthetase. The reaction takes place in the presence of glutamine and ATP through an activated gamma-phospho-Glu-tRNA(Gln). This Synechococcus sp. (strain ATCC 27144 / PCC 6301 / SAUG 1402/1) (Anacystis nidulans) protein is Glutamyl-tRNA(Gln) amidotransferase subunit A.